The sequence spans 122 residues: Large ribosomal subunit protein uL14 (122 aa).

This sequence belongs to the universal ribosomal protein uL14 family. As to quaternary structure, part of the 50S ribosomal subunit. Forms a cluster with proteins L3 and L19. In the 70S ribosome, L14 and L19 interact and together make contacts with the 16S rRNA in bridges B5 and B8.

Functionally, binds to 23S rRNA. Forms part of two intersubunit bridges in the 70S ribosome. In Corynebacterium aurimucosum (strain ATCC 700975 / DSM 44827 / CIP 107346 / CN-1) (Corynebacterium nigricans), this protein is Large ribosomal subunit protein uL14.